Reading from the N-terminus, the 842-residue chain is Alanine--tRNA ligase (842 aa).

Residues H549, H553, C650, and H654 each coordinate Zn(2+).

This sequence belongs to the class-II aminoacyl-tRNA synthetase family. Requires Zn(2+) as cofactor.

It localises to the cytoplasm. The catalysed reaction is tRNA(Ala) + L-alanine + ATP = L-alanyl-tRNA(Ala) + AMP + diphosphate. Catalyzes the attachment of alanine to tRNA(Ala) in a two-step reaction: alanine is first activated by ATP to form Ala-AMP and then transferred to the acceptor end of tRNA(Ala). Also edits incorrectly charged Ser-tRNA(Ala) and Gly-tRNA(Ala) via its editing domain. This chain is Alanine--tRNA ligase, found in Campylobacter jejuni (strain RM1221).